The following is a 427-amino-acid chain: Adenylosuccinate synthetase (427 aa).

GTP contacts are provided by residues 12–18 (GDEGKGK) and 40–42 (GHT). The active-site Proton acceptor is Asp-13. Mg(2+) is bound by residues Asp-13 and Gly-40. IMP-binding positions include 13-16 (DEGK), 38-41 (NAGH), Thr-128, Arg-142, Gln-223, Thr-238, and Arg-302. The active-site Proton donor is the His-41. 298 to 304 (TTTGRPR) provides a ligand contact to substrate. GTP is bound by residues Arg-304, 330–332 (SID), and 412–414 (SVG).

It belongs to the adenylosuccinate synthetase family. Homodimer. Mg(2+) is required as a cofactor.

The protein localises to the cytoplasm. It carries out the reaction IMP + L-aspartate + GTP = N(6)-(1,2-dicarboxyethyl)-AMP + GDP + phosphate + 2 H(+). The protein operates within purine metabolism; AMP biosynthesis via de novo pathway; AMP from IMP: step 1/2. Plays an important role in the de novo pathway of purine nucleotide biosynthesis. Catalyzes the first committed step in the biosynthesis of AMP from IMP. In Staphylococcus saprophyticus subsp. saprophyticus (strain ATCC 15305 / DSM 20229 / NCIMB 8711 / NCTC 7292 / S-41), this protein is Adenylosuccinate synthetase.